Here is a 188-residue protein sequence, read N- to C-terminus: Elongation factor P (188 aa).

N6-(3,6-diaminohexanoyl)-5-hydroxylysine is present on lysine 34.

The protein belongs to the elongation factor P family. Post-translationally, is beta-lysylated on the epsilon-amino group of Lys-34 by the combined action of EpmA and EpmB, and then hydroxylated on the C5 position of the same residue by EpmC. Lysylation is critical for the stimulatory effect of EF-P on peptide-bond formation. The lysylation moiety would extend toward the peptidyltransferase center and stabilize the terminal 3-CCA end of the tRNA. The hydroxylation of the C5 position on Lys-34 would allow additional potential stabilizing hydrogen-bond interactions with the P-tRNA.

The protein localises to the cytoplasm. Its pathway is protein biosynthesis; polypeptide chain elongation. Functionally, involved in peptide bond synthesis. Alleviates ribosome stalling that occurs when 3 or more consecutive Pro residues or the sequence PPG is present in a protein, possibly by augmenting the peptidyl transferase activity of the ribosome. Modification of Lys-34 is required for alleviation. The chain is Elongation factor P from Salmonella arizonae (strain ATCC BAA-731 / CDC346-86 / RSK2980).